Here is a 268-residue protein sequence, read N- to C-terminus: Universal stress protein MT3220 (268 aa).

ATP-binding positions include Gly13, 107 to 113, Arg117, and 120 to 121; these read GSVGLDH and SV.

The protein belongs to the universal stress protein A family.

This is Universal stress protein MT3220 from Mycobacterium tuberculosis (strain CDC 1551 / Oshkosh).